A 523-amino-acid chain; its full sequence is MSYDPADLPPRTGSNLPEMSVGDLARALKRTVEDAYGYVRVRGEISQPKRHSSGHVYLRLKDETAVLEAVCWKGVAARLSVRPEEGMEVVCTGRLTTYPGRSQYQLVIETMELAGEGALLKMLEERKRRLAAEGLFAPERKKPLPFLPEVIGVVTSPTGAVIRDILHRLADRFPRHVLLWPVAVQGEGAADQVARAIAGFNAIAPGGPVPRPDLIIVARGGGSLEDLMPFNEEAVVRAAAASAIPLISAVGHETDTTLIDFASDRRAPTPTAAAEMAVPVRTELLAQVLDDGRRLHQCLSRAIDTRRSHVEGLGRGLGDPRALLEGCIQRLDDRAERLELSLRTGLERRHAAVQQLGIRLRHPREVIGLAAARADAAGRALRAGFDRAVTVEQGRFHRVADRLSPLPLRRQIDAGRDRLDALPPRLAQAHARRLDQAGQRLVALGQLLESYSYKGVLERGFVLVADAEGRPVTRAADTAPGQPVALRFADGTVGAVVDGAAPGASPAARTRAGKAKADQGSLF.

Residues 502–523 (PGASPAARTRAGKAKADQGSLF) form a disordered region.

Belongs to the XseA family. Heterooligomer composed of large and small subunits.

The protein resides in the cytoplasm. It carries out the reaction Exonucleolytic cleavage in either 5'- to 3'- or 3'- to 5'-direction to yield nucleoside 5'-phosphates.. Its function is as follows. Bidirectionally degrades single-stranded DNA into large acid-insoluble oligonucleotides, which are then degraded further into small acid-soluble oligonucleotides. The polypeptide is Exodeoxyribonuclease 7 large subunit (Rhodospirillum centenum (strain ATCC 51521 / SW)).